Here is a 530-residue protein sequence, read N- to C-terminus: ATP synthase subunit alpha 3 (530 aa).

ATP is bound at residue 174–181 (GDRATGKT). A compositionally biased stretch (low complexity) spans 507-522 (TASATAPPDPPAASAA). A disordered region spans residues 507-530 (TASATAPPDPPAASAAELPQPDSP).

This sequence belongs to the ATPase alpha/beta chains family. As to quaternary structure, F-type ATPases have 2 components, CF(1) - the catalytic core - and CF(0) - the membrane proton channel. CF(1) has five subunits: alpha(3), beta(3), gamma(1), delta(1), epsilon(1). CF(0) has three main subunits: a(1), b(2) and c(9-12). The alpha and beta chains form an alternating ring which encloses part of the gamma chain. CF(1) is attached to CF(0) by a central stalk formed by the gamma and epsilon chains, while a peripheral stalk is formed by the delta and b chains.

The protein resides in the cell inner membrane. It catalyses the reaction ATP + H2O + 4 H(+)(in) = ADP + phosphate + 5 H(+)(out). Functionally, produces ATP from ADP in the presence of a proton gradient across the membrane. The alpha chain is a regulatory subunit. This Paraburkholderia xenovorans (strain LB400) protein is ATP synthase subunit alpha 3.